The primary structure comprises 211 residues: Large ribosomal subunit protein uL4 (211 aa).

Positions Arg63–Val94 are disordered.

This sequence belongs to the universal ribosomal protein uL4 family. Part of the 50S ribosomal subunit.

One of the primary rRNA binding proteins, this protein initially binds near the 5'-end of the 23S rRNA. It is important during the early stages of 50S assembly. It makes multiple contacts with different domains of the 23S rRNA in the assembled 50S subunit and ribosome. Its function is as follows. Forms part of the polypeptide exit tunnel. In Maricaulis maris (strain MCS10) (Caulobacter maris), this protein is Large ribosomal subunit protein uL4.